Consider the following 445-residue polypeptide: Exodeoxyribonuclease 7 large subunit (445 aa).

It belongs to the XseA family. In terms of assembly, heterooligomer composed of large and small subunits.

It is found in the cytoplasm. The enzyme catalyses Exonucleolytic cleavage in either 5'- to 3'- or 3'- to 5'-direction to yield nucleoside 5'-phosphates.. Bidirectionally degrades single-stranded DNA into large acid-insoluble oligonucleotides, which are then degraded further into small acid-soluble oligonucleotides. The chain is Exodeoxyribonuclease 7 large subunit from Staphylococcus epidermidis (strain ATCC 12228 / FDA PCI 1200).